We begin with the raw amino-acid sequence, 20 residues long: Implantin (20 aa).

It belongs to the EF-1-beta/EF-1-delta family. In terms of processing, phosphorylated. As to expression, uterus and embryo.

It localises to the cytoplasm. The protein localises to the nucleus. Its function is as follows. Binds DNA. This chain is Implantin, found in Mus musculus (Mouse).